Reading from the N-terminus, the 296-residue chain is 4-amino-4-deoxyprephenate dehydrogenase (296 aa).

The 280-residue stretch at 9–288 (RCVVVGGAGA…EHGAELERLC (280 aa)) folds into the Prephenate/arogenate dehydrogenase domain.

It belongs to the prephenate/arogenate dehydrogenase family.

The enzyme catalyses 4-amino-4-deoxyprephenate + NAD(+) = 3-(4-aminophenyl)pyruvate + CO2 + NADH + H(+). It functions in the pathway antibiotic biosynthesis. In terms of biological role, involved in pristinamycin I biosynthesis. Probably catalyzes the formation of 3-(4-aminophenyl)pyruvate from 4-amino-4-deoxyprephenate. The chain is 4-amino-4-deoxyprephenate dehydrogenase from Streptomyces pristinaespiralis.